A 411-amino-acid polypeptide reads, in one-letter code: Peptidase T (411 aa).

Zn(2+) is bound at residue His-78. Residue Asp-80 is part of the active site. Residue Asp-140 participates in Zn(2+) binding. Glu-173 serves as the catalytic Proton acceptor. Zn(2+)-binding residues include Glu-174, Asp-196, and His-379.

This sequence belongs to the peptidase M20B family. Zn(2+) is required as a cofactor.

The protein localises to the cytoplasm. The enzyme catalyses Release of the N-terminal residue from a tripeptide.. In terms of biological role, cleaves the N-terminal amino acid of tripeptides. The protein is Peptidase T of Yersinia pestis bv. Antiqua (strain Antiqua).